A 129-amino-acid polypeptide reads, in one-letter code: Small ribosomal subunit protein uS11 (129 aa).

This sequence belongs to the universal ribosomal protein uS11 family. Part of the 30S ribosomal subunit. Interacts with proteins S7 and S18. Binds to IF-3.

Located on the platform of the 30S subunit, it bridges several disparate RNA helices of the 16S rRNA. Forms part of the Shine-Dalgarno cleft in the 70S ribosome. In Enterobacter sp. (strain 638), this protein is Small ribosomal subunit protein uS11.